We begin with the raw amino-acid sequence, 277 residues long: Shikimate dehydrogenase (NADP(+)) (277 aa).

Shikimate-binding positions include 15-17 (SLS) and threonine 62. The active-site Proton acceptor is the lysine 66. 2 residues coordinate shikimate: asparagine 87 and aspartate 102. NADP(+) is bound by residues 127 to 131 (GAGGA), 151 to 156 (NRTVDK), and isoleucine 219. Tyrosine 221 lines the shikimate pocket. Glycine 242 contacts NADP(+).

This sequence belongs to the shikimate dehydrogenase family. As to quaternary structure, homodimer.

It carries out the reaction shikimate + NADP(+) = 3-dehydroshikimate + NADPH + H(+). It functions in the pathway metabolic intermediate biosynthesis; chorismate biosynthesis; chorismate from D-erythrose 4-phosphate and phosphoenolpyruvate: step 4/7. Functionally, involved in the biosynthesis of the chorismate, which leads to the biosynthesis of aromatic amino acids. Catalyzes the reversible NADPH linked reduction of 3-dehydroshikimate (DHSA) to yield shikimate (SA). This chain is Shikimate dehydrogenase (NADP(+)), found in Bacillus cereus (strain G9842).